A 338-amino-acid chain; its full sequence is Tetraacyldisaccharide 4'-kinase (338 aa).

53–60 is an ATP binding site; the sequence is TVGGSGKT.

Belongs to the LpxK family.

The enzyme catalyses a lipid A disaccharide + ATP = a lipid IVA + ADP + H(+). It functions in the pathway glycolipid biosynthesis; lipid IV(A) biosynthesis; lipid IV(A) from (3R)-3-hydroxytetradecanoyl-[acyl-carrier-protein] and UDP-N-acetyl-alpha-D-glucosamine: step 6/6. Its function is as follows. Transfers the gamma-phosphate of ATP to the 4'-position of a tetraacyldisaccharide 1-phosphate intermediate (termed DS-1-P) to form tetraacyldisaccharide 1,4'-bis-phosphate (lipid IVA). The polypeptide is Tetraacyldisaccharide 4'-kinase (Azorhizobium caulinodans (strain ATCC 43989 / DSM 5975 / JCM 20966 / LMG 6465 / NBRC 14845 / NCIMB 13405 / ORS 571)).